Reading from the N-terminus, the 125-residue chain is Ribosome-binding factor A (125 aa).

The protein belongs to the RbfA family. As to quaternary structure, monomer. Binds 30S ribosomal subunits, but not 50S ribosomal subunits or 70S ribosomes.

It is found in the cytoplasm. Its function is as follows. One of several proteins that assist in the late maturation steps of the functional core of the 30S ribosomal subunit. Associates with free 30S ribosomal subunits (but not with 30S subunits that are part of 70S ribosomes or polysomes). Required for efficient processing of 16S rRNA. May interact with the 5'-terminal helix region of 16S rRNA. This is Ribosome-binding factor A from Akkermansia muciniphila (strain ATCC BAA-835 / DSM 22959 / JCM 33894 / BCRC 81048 / CCUG 64013 / CIP 107961 / Muc).